The following is an 808-amino-acid chain: DNA replication licensing factor MCM3 (808 aa).

Ala-2 carries the N-acetylalanine modification. Phosphoserine occurs at positions 160 and 275. Residue Lys-293 is modified to N6-acetyllysine. The MCM domain occupies Ile-295–Leu-502. The ADP site is built by Gln-353, Leu-393, Glu-394, Ala-395, and Ala-397. Positions Ser-477–Asp-480 match the Arginine finger motif. Ala-523 is an ATP binding site. Ser-535 bears the Phosphoserine; by ATM mark. Position 547 is an N6-acetyllysine (Lys-547). Residue Ser-611 is modified to Phosphoserine. The interval Lys-662–Glu-738 is disordered. Residue Arg-664 coordinates ATP. Phosphoserine is present on residues Ser-668 and Ser-672. Composition is skewed to acidic residues over residues Asp-670–Ser-681 and Ser-704–Met-717. Phosphothreonine is present on Thr-674. Phosphoserine is present on Ser-681. A Phosphotyrosine modification is found at Tyr-708. Ser-711 carries the phosphoserine modification. Residues Thr-713, Thr-722, and Thr-725 each carry the phosphothreonine modification. Residues Asp-727–Glu-738 show a composition bias toward basic and acidic residues. Residues Ser-728 and Ser-734 each carry the phosphoserine modification.

It belongs to the MCM family. As to quaternary structure, component of the MCM2-7 complex. The complex forms a toroidal hexameric ring with the proposed subunit order MCM2-MCM6-MCM4-MCM7-MCM3-MCM5. Component of the CMG helicase complex, a hexameric ring of related MCM2-7 subunits stabilized by CDC45 and the tetrameric GINS complex. Associated with the replication-specific DNA polymerase alpha. Interacts with MCMBP. Interacts with ANKRD17. Interacts with MCM3AP isoform MCM3AP; this interaction leads to MCM3 acetylation. Post-translationally, acetylated by MCM3AP. O-glycosylated (O-GlcNAcylated), in a cell cycle-dependent manner.

Its subcellular location is the nucleus. The protein localises to the chromosome. The enzyme catalyses ATP + H2O = ADP + phosphate + H(+). Functionally, acts as a component of the MCM2-7 complex (MCM complex) which is the replicative helicase essential for 'once per cell cycle' DNA replication initiation and elongation in eukaryotic cells. Core component of CDC45-MCM-GINS (CMG) helicase, the molecular machine that unwinds template DNA during replication, and around which the replisome is built. The active ATPase sites in the MCM2-7 ring are formed through the interaction surfaces of two neighboring subunits such that a critical structure of a conserved arginine finger motif is provided in trans relative to the ATP-binding site of the Walker A box of the adjacent subunit. The six ATPase active sites, however, are likely to contribute differentially to the complex helicase activity. Required for the entry in S phase and for cell division. The chain is DNA replication licensing factor MCM3 (MCM3) from Pongo abelii (Sumatran orangutan).